The following is a 128-amino-acid chain: Probable 4-amino-4-deoxy-L-arabinose-phosphoundecaprenol flippase subunit ArnF (128 aa).

The Cytoplasmic portion of the chain corresponds to 1–2; sequence MG. Residues 3–23 form a helical membrane-spanning segment; sequence LMWGLFSVIIASAAQLSMGFA. Residues 24-35 lie on the Periplasmic side of the membrane; that stretch reads ASHLPPMTHLWD. Residues 36 to 56 form a helical membrane-spanning segment; sequence FIAALLAFGLDARILLLGLLG. Residues 57–76 are Cytoplasmic-facing; sequence YLLSVFCWYKTLHKLALSKA. A helical transmembrane segment spans residues 77–97; that stretch reads YALLSMSYVLVWIASMVLPGW. Topologically, residues 98–100 are periplasmic; it reads EGT. Residues 101-121 traverse the membrane as a helical segment; the sequence is FSLKALLGVACIMSGLMLIFL. The Cytoplasmic segment spans residues 122-128; it reads PTTKQRY.

Belongs to the ArnF family. As to quaternary structure, heterodimer of ArnE and ArnF.

The protein localises to the cell inner membrane. Its pathway is bacterial outer membrane biogenesis; lipopolysaccharide biosynthesis. In terms of biological role, translocates 4-amino-4-deoxy-L-arabinose-phosphoundecaprenol (alpha-L-Ara4N-phosphoundecaprenol) from the cytoplasmic to the periplasmic side of the inner membrane. This chain is Probable 4-amino-4-deoxy-L-arabinose-phosphoundecaprenol flippase subunit ArnF, found in Escherichia coli O45:K1 (strain S88 / ExPEC).